We begin with the raw amino-acid sequence, 167 residues long: Photosystem I assembly protein Ycf3 (167 aa).

3 TPR repeats span residues 35 to 68 (AFAY…EVDA), 72 to 105 (SYIL…NPSL), and 120 to 153 (GEQA…APTN).

This sequence belongs to the Ycf3 family.

It is found in the plastid. Its subcellular location is the chloroplast thylakoid membrane. Its function is as follows. Essential for the assembly of the photosystem I (PSI) complex. May act as a chaperone-like factor to guide the assembly of the PSI subunits. The chain is Photosystem I assembly protein Ycf3 from Stigeoclonium helveticum (Green alga).